We begin with the raw amino-acid sequence, 163 residues long: LHHSKHHATYVKGVNDAVAKLQEARANDDHAAIFLNEKNLAFHLGGHVNHSIWWKNLSPDGGDKPTGELAAAIDDAFGSFDKFRAQFSAAANGLQGSGWAVLGYDTLGSRLLTFQLYDQQANVPLGIIPLLQVDMWEHAFYLQYKNVKADYVKAFWNVVNWAE.

Mn(2+)-binding residues include H2, H50, D134, and H138.

The protein belongs to the iron/manganese superoxide dismutase family. The cofactor is Mn(2+).

It catalyses the reaction 2 superoxide + 2 H(+) = H2O2 + O2. Functionally, destroys superoxide anion radicals which are normally produced within the cells and which are toxic to biological systems. The polypeptide is Superoxide dismutase [Mn] (sodA) (Mycobacterium scrofulaceum).